Consider the following 1192-residue polypeptide: DNA topoisomerase 2 (1192 aa).

ATP contacts are provided by residues Asn-64, Asn-95, and 142–149; that span reads GTNGVGLK. Mg(2+)-binding residues include Glu-438, Asp-539, and Asp-541. Positions 707–1174 constitute a Topo IIA-type catalytic domain; sequence IPNFLDGMTR…PGASVWLEEI (468 aa). The active-site O-(5'-phospho-DNA)-tyrosine intermediate is the Tyr-800.

Belongs to the type II topoisomerase family. Mg(2+) serves as cofactor. Mn(2+) is required as a cofactor. Requires Ca(2+) as cofactor.

The protein localises to the host cytoplasm. It catalyses the reaction ATP-dependent breakage, passage and rejoining of double-stranded DNA.. Its function is as follows. Type II topoisomerase. Processively relaxes supercoiled DNA. Displays DNA-supercoiling activity only when associated with the viral histone-like protein. The protein is DNA topoisomerase 2 (TOP) of African swine fever virus (strain Badajoz 1971 Vero-adapted) (Ba71V).